The chain runs to 790 residues: MAQVLNDISNRVLPLFPIRNTVLFPGLVLPILIGRDDSVKNLLRLGNDSENQHTILLTTQKNADDIKPSINSLYKIGVLAKITELVQLPNDNYKILIKVLDRVKLTIRRSHDLLVAEYVIVPDDEINNADEIKDKLANAIVLFNKYIRLSKKINPDLLVHVLSYTNQSYVVNALAANLICNVANKQSLLEITDVKQRIERLTDHVAKEIIIMETDELITSKAQKNLEKMQRDCFLNEKMKIIKNVLGVDDEKSDIAELQKKIDTLHLSKEAKAKAESELKKLKMMNPISAEAALTRNYLDILLGLPWKKEKESKININIDKALQDLNADHHGLEKVKERITEYLAVLQRTKKSIGTILCFIGPPGVGKTSLVKSIAEATKCKYAKFALGGVRDEAEIRGHRKTYIGAMPGKIISLIKRENSNNLVILLDEIDKISRDSRGDPAFALLEVLDPEQNSRFQDNYLEVEYDLSKVLFIATANSFNFPIPLRDRMEIIQIPGYVEGEKLEIAKHHLIPKQIKNNGLKNTEISFSDEAILELIRYYTREAGVRGLERKIGGICRKVLKKILSSKDIKSESVSKENIKDYLGSRKYKYGLAEDDNQVGITIGLAYTETGGDLIWVEAVMIPGKGKVKATGKLGDVMKESSQTAFSYFCSRAQKYNVKYEQYHKYDIHIHFPEGAIPKDGPSAGIAIFTTIVSLMTGIPVKLSVAMTGEITLRGRILPIGGLKEKLMAAKRGGIKTVIIPEGNTSDLEDIPNSIKNDLDIIPLSEADQVLDIALATTVTNSPAETAC.

The Lon N-terminal domain occupies 13–209 (LPLFPIRNTV…RLTDHVAKEI (197 aa)). 362-369 (GPPGVGKT) lines the ATP pocket. The Lon proteolytic domain maps to 598–779 (DNQVGITIGL…DQVLDIALAT (182 aa)). Residues Ser685 and Lys728 contribute to the active site.

This sequence belongs to the peptidase S16 family. In terms of assembly, homohexamer. Organized in a ring with a central cavity.

It localises to the cytoplasm. The enzyme catalyses Hydrolysis of proteins in presence of ATP.. In terms of biological role, ATP-dependent serine protease that mediates the selective degradation of mutant and abnormal proteins as well as certain short-lived regulatory proteins. Required for cellular homeostasis and for survival from DNA damage and developmental changes induced by stress. Degrades polypeptides processively to yield small peptide fragments that are 5 to 10 amino acids long. Binds to DNA in a double-stranded, site-specific manner. The chain is Lon protease from Orientia tsutsugamushi (strain Ikeda) (Rickettsia tsutsugamushi).